Here is a 415-residue protein sequence, read N- to C-terminus: tRNA(Ile2) 2-agmatinylcytidine synthetase TiaS (415 aa).

This sequence belongs to the TiaS family.

It is found in the cytoplasm. The catalysed reaction is cytidine(34) in tRNA(Ile2) + agmatine + ATP + H2O = 2-agmatinylcytidine(34) in tRNA(Ile2) + AMP + 2 phosphate + 2 H(+). Functionally, ATP-dependent agmatine transferase that catalyzes the formation of 2-agmatinylcytidine (agm2C) at the wobble position (C34) of tRNA(Ile2), converting the codon specificity from AUG to AUA. The polypeptide is tRNA(Ile2) 2-agmatinylcytidine synthetase TiaS (Pyrobaculum neutrophilum (strain DSM 2338 / JCM 9278 / NBRC 100436 / V24Sta) (Thermoproteus neutrophilus)).